Reading from the N-terminus, the 62-residue chain is Insect toxin BsIT4 (62 aa).

Residues 1–62 (DGYIKGNKGC…WLYAATNTCG (62 aa)) enclose the LCN-type CS-alpha/beta domain. Cystine bridges form between cysteine 10–cysteine 61, cysteine 14–cysteine 35, cysteine 21–cysteine 42, and cysteine 25–cysteine 44.

This sequence belongs to the long (4 C-C) scorpion toxin superfamily. Sodium channel inhibitor family. Beta subfamily. Expressed by the venom gland.

It is found in the secreted. Its function is as follows. Depressant insect beta-toxins cause a transient contraction paralysis followed by a slow flaccid paralysis. They bind voltage-independently at site-4 of sodium channels (Nav) and shift the voltage of activation toward more negative potentials thereby affecting sodium channel activation and promoting spontaneous and repetitive firing. This toxin is active only on insects. The protein is Insect toxin BsIT4 of Hottentotta tamulus sindicus (Scorpion).